The following is a 269-amino-acid chain: Putative pyruvate, phosphate dikinase regulatory protein (269 aa).

ADP is bound at residue 147 to 154 (GVSRTSKT).

Belongs to the pyruvate, phosphate/water dikinase regulatory protein family. PDRP subfamily.

The enzyme catalyses N(tele)-phospho-L-histidyl/L-threonyl-[pyruvate, phosphate dikinase] + ADP = N(tele)-phospho-L-histidyl/O-phospho-L-threonyl-[pyruvate, phosphate dikinase] + AMP + H(+). It carries out the reaction N(tele)-phospho-L-histidyl/O-phospho-L-threonyl-[pyruvate, phosphate dikinase] + phosphate + H(+) = N(tele)-phospho-L-histidyl/L-threonyl-[pyruvate, phosphate dikinase] + diphosphate. In terms of biological role, bifunctional serine/threonine kinase and phosphorylase involved in the regulation of the pyruvate, phosphate dikinase (PPDK) by catalyzing its phosphorylation/dephosphorylation. The polypeptide is Putative pyruvate, phosphate dikinase regulatory protein (Geotalea uraniireducens (strain Rf4) (Geobacter uraniireducens)).